The sequence spans 35 residues: Mu-theraphotoxin-Ca2a (35 aa).

Cystine bridges form between C2–C17, C9–C24, and C16–C31.

The protein belongs to the neurotoxin 10 (Hwtx-1) family. 10 (haplotoxin-1) subfamily. Expressed by the venom gland.

The protein localises to the secreted. Potently inhibits Nav1.7/SCN9A (IC(50)=98.1 nM), and moderately inhibits Nav1.2/SCN2A (IC(50)=216.3 nM), Nav1.6/SCN8A (IC(50)=313.6 nM), and Nav1.3/SCN3A (IC(50)=491.3 nM). Hyperpolarizes the slow inactivation, but does not alter the voltage-dependent activation or fast inactivation of Nav1.7/SCN9A. Binds with Nav1.7/SCN9A at the extracellular S3-S4 linker of domain II (site 4). In vivo, exhibits dose-dependent analgesic efficacy by reducing pain responses in rodent models of formalin-induced paw licking, hot plate test, and acetic acid-induced writhing. This chain is Mu-theraphotoxin-Ca2a, found in Cyriopagopus albostriatus (Cambodian tiger tarantula).